The primary structure comprises 568 residues: MMAEQVKCASAGVSSGAGSGPVVNAELEVKKLQELVRKLEKQNEQLRSRAASAAAAPHLLLLPPPPPAAPPPAGLQPLGPRSPPAATATAAASGGLGPAFPGTFCLPSPAPSLLCSLAQPPEAPFVYFKPAAGFFGAGGGGPEPGGAGTPPGAAAAPPSPPPTLLDEVELLDLESVAAWRDEDDYTWLYIGSSKTFTSSEKSLTPLQWCRHVLDNPTPEMEAARRSLCFRLEQGYTSRGSPLSPQSSIDSELSTSELEDDSISMGYKLQDLTDVQIMARLQEESLRQDYASTSASVSRHSSSVSLSSGKKGTCSDQEYDQYSLEDEEEFDHLPPPQPRLPRCSPFQRGIPHSQTFSSIRECRRSPSSQYFPSNNYQQQQYYSPQAQTPDQQPNRTNGDKLRRSMPNLARMPSTTAISSNISSPVTVRNSQSFDSSLHGAGNGISRIQSCIPSPGQLQHRVHSVGHFPVSIRQPLKATAYVSPTVQGSSNMPLSNGLQLYSNTGIPTPNKAAASGIMGRSALPRPSLAINGSNLPRSKIAQPVRSFLQPPKPLSSLSTLRDGNWRDGCY.

5 disordered regions span residues 1–22 (MMAEQVKCASAGVSSGAGSGPV), 59–92 (LLLLPPPPPAAPPPAGLQPLGPRSPPAATATAAA), 139–162 (GGGPEPGGAGTPPGAAAAPPSPPP), 235–256 (YTSRGSPLSPQSSIDSELSTSE), and 291–403 (STSA…LRRS). A coiled-coil region spans residues 21–56 (PVVNAELEVKKLQELVRKLEKQNEQLRSRAASAAAA). Residues 62-74 (LPPPPPAAPPPAG) are compositionally biased toward pro residues. Low complexity predominate over residues 75 to 92 (LQPLGPRSPPAATATAAA). Over residues 139–149 (GGGPEPGGAGT) the composition is skewed to gly residues. Over residues 235–245 (YTSRGSPLSPQ) the composition is skewed to polar residues. At S243 the chain carries Phosphoserine. Composition is skewed to low complexity over residues 246–255 (SSIDSELSTS) and 291–307 (STSASVSRHSSSVSLSS). Over residues 316 to 329 (QEYDQYSLEDEEEF) the composition is skewed to acidic residues. Over residues 366–384 (SSQYFPSNNYQQQQYYSPQ) the composition is skewed to low complexity. Polar residues predominate over residues 385–395 (AQTPDQQPNRT). R471 and R543 each carry asymmetric dimethylarginine.

Belongs to the SLAIN motif-containing family. As to quaternary structure, interacts with MAPRE1, MAPRE2, MAPRE3 and CKAP5. Interacts with ZDHHC17 (via ANK repeats). As to expression, expressed in embryonic stem cells. Expressed in brain.

Its subcellular location is the cytoplasm. The protein localises to the cytoskeleton. Microtubule plus-end tracking protein that might be involved in the regulation of cytoplasmic microtubule dynamics, microtubule organization and microtubule elongation. The sequence is that of SLAIN motif-containing protein 1 (SLAIN1) from Homo sapiens (Human).